Reading from the N-terminus, the 143-residue chain is Hemoglobin subunit alpha (143 aa).

Serine 1 carries the N-acetylserine modification. Positions 1-143 constitute a Globin domain; that stretch reads SLSATDKARV…LALALSEKYR (143 aa). Histidine 60 serves as a coordination point for O2. Histidine 89 provides a ligand contact to heme b.

This sequence belongs to the globin family. Heterotetramer of two alpha chains and two beta chains. Red blood cells.

Involved in oxygen transport from gills to the various peripheral tissues. The protein is Hemoglobin subunit alpha (hba) of Leiostomus xanthurus (Spot).